A 140-amino-acid chain; its full sequence is Trafficking protein particle complex subunit 2-like protein (140 aa).

It belongs to the TRAPP small subunits family. Sedlin subfamily.

This Dictyostelium discoideum (Social amoeba) protein is Trafficking protein particle complex subunit 2-like protein (trappc2l).